The chain runs to 197 residues: Probable GTP-binding protein EngB (197 aa).

The EngB-type G domain occupies 22–197 (TGVEVAFAGR…FKEKLDTWYQ (176 aa)). Residues 30 to 37 (GRSNAGKS), 57 to 61 (GRTQL), 75 to 78 (DLPG), 142 to 145 (TKAD), and 177 to 179 (FSS) each bind GTP. 2 residues coordinate Mg(2+): S37 and T59.

This sequence belongs to the TRAFAC class TrmE-Era-EngA-EngB-Septin-like GTPase superfamily. EngB GTPase family. Mg(2+) serves as cofactor.

In terms of biological role, necessary for normal cell division and for the maintenance of normal septation. The chain is Probable GTP-binding protein EngB from Francisella tularensis subsp. tularensis (strain FSC 198).